Here is a 203-residue protein sequence, read N- to C-terminus: N-(5'-phosphoribosyl)anthranilate isomerase (203 aa).

Belongs to the TrpF family.

The enzyme catalyses N-(5-phospho-beta-D-ribosyl)anthranilate = 1-(2-carboxyphenylamino)-1-deoxy-D-ribulose 5-phosphate. It functions in the pathway amino-acid biosynthesis; L-tryptophan biosynthesis; L-tryptophan from chorismate: step 3/5. The protein is N-(5'-phosphoribosyl)anthranilate isomerase of Thermoanaerobacter pseudethanolicus (strain ATCC 33223 / 39E) (Clostridium thermohydrosulfuricum).